A 288-amino-acid chain; its full sequence is Phosphatidylserine decarboxylase proenzyme (288 aa).

Catalysis depends on charge relay system; for autoendoproteolytic cleavage activity residues Asp95, His152, and Ser255. Ser255 functions as the Schiff-base intermediate with substrate; via pyruvic acid; for decarboxylase activity in the catalytic mechanism. The residue at position 255 (Ser255) is a Pyruvic acid (Ser); by autocatalysis.

It belongs to the phosphatidylserine decarboxylase family. PSD-B subfamily. Prokaryotic type I sub-subfamily. In terms of assembly, heterodimer of a large membrane-associated beta subunit and a small pyruvoyl-containing alpha subunit. Requires pyruvate as cofactor. Post-translationally, is synthesized initially as an inactive proenzyme. Formation of the active enzyme involves a self-maturation process in which the active site pyruvoyl group is generated from an internal serine residue via an autocatalytic post-translational modification. Two non-identical subunits are generated from the proenzyme in this reaction, and the pyruvate is formed at the N-terminus of the alpha chain, which is derived from the carboxyl end of the proenzyme. The autoendoproteolytic cleavage occurs by a canonical serine protease mechanism, in which the side chain hydroxyl group of the serine supplies its oxygen atom to form the C-terminus of the beta chain, while the remainder of the serine residue undergoes an oxidative deamination to produce ammonia and the pyruvoyl prosthetic group on the alpha chain. During this reaction, the Ser that is part of the protease active site of the proenzyme becomes the pyruvoyl prosthetic group, which constitutes an essential element of the active site of the mature decarboxylase.

The protein localises to the cell membrane. The enzyme catalyses a 1,2-diacyl-sn-glycero-3-phospho-L-serine + H(+) = a 1,2-diacyl-sn-glycero-3-phosphoethanolamine + CO2. It functions in the pathway phospholipid metabolism; phosphatidylethanolamine biosynthesis; phosphatidylethanolamine from CDP-diacylglycerol: step 2/2. Catalyzes the formation of phosphatidylethanolamine (PtdEtn) from phosphatidylserine (PtdSer). The chain is Phosphatidylserine decarboxylase proenzyme from Methylococcus capsulatus (strain ATCC 33009 / NCIMB 11132 / Bath).